The sequence spans 468 residues: DNA polymerase IV 1 (468 aa).

The UmuC domain occupies 6–188 (VLHLDMDAFF…LPVRRLWGIG (183 aa)). Mg(2+) is bound by residues Asp-10 and Asp-105. Glu-106 is an active-site residue.

It belongs to the DNA polymerase type-Y family. In terms of assembly, monomer. Mg(2+) is required as a cofactor.

It is found in the cytoplasm. It catalyses the reaction DNA(n) + a 2'-deoxyribonucleoside 5'-triphosphate = DNA(n+1) + diphosphate. Functionally, poorly processive, error-prone DNA polymerase involved in untargeted mutagenesis. Copies undamaged DNA at stalled replication forks, which arise in vivo from mismatched or misaligned primer ends. These misaligned primers can be extended by PolIV. Exhibits no 3'-5' exonuclease (proofreading) activity. May be involved in translesional synthesis, in conjunction with the beta clamp from PolIII. This chain is DNA polymerase IV 1 (dinB1), found in Mycobacterium tuberculosis (strain CDC 1551 / Oshkosh).